A 938-amino-acid chain; its full sequence is MSTMHLLTFALLFSCSFARAACDPKIVNIGAVLSTRKHEQMFREAVNQANKRHGSWKIQLNATSVTHKPNAIQMALSVCEDLISSQVYAILVSHPPTPNDHFTPTPVSYTAGFYRIPVLGLTTRMSIYSDKSIHLSFLRTVPPYSHQSSVWFEMMRVYNWNHIILLVSDDHEGRAAQKRLETLLEERESKAEKVLQFDPGTKNVTALLMEARDLEARVIILSASEDDAATVYRAAAMLNMTGSGYVWLVGEREISGNALRYAPDGIIGLQLINGKNESAHISDAVGVVAQAVHELLEKENITDPPRGCVGNTNIWKTGPLFKRVLMSSKYADGVTGRVEFNEDGDRKFANYSIMNLQNRKLVQVGIYNGTHVIPNDRKIIWPGGETEKPRGYQMSTRLKIVTIHQEPFVYVKPTMSDGTCKEEFTVNGDPVKKVICTGPNDTSPGSPRHTVPQCCYGFCVDLLIKLARTMNFTYEVHLVADGKFGTQERVNNSNKKEWNGMMGELLSGQADMIVAPLTINNERAQYIEFSKPFKYQGLTILVKKEIPRSTLDSFMQPFQSTLWLLVGLSVHVVAVMLYLLDRFSPFGRFKVNSEEEEEDALTLSSAMWFSWGVLLNSGIGEGAPRSFSARILGMVWAGFAMIIVASYTANLAAFLVLDRPEERITGINDPRLRNPSDKFIYATVKQSSVDIYFRRQVELSTMYRHMEKHNYESAAEAIQAVRDNKLHAFIWDSAVLEFEASQKCDLVTTGELFFRSGFGIGMRKDSPWKQNVSLSILKSHENGFMEDLDKTWVRYQECDSRSNAPATLTFENMAGVFMLVAGGIVAGIFLIFIEIAYKRHKDARRKQMQLAFAAVNVWRKNLQDRKSGRAEPDPKKKATFRAITSTLASSFKRRRSSKDTSTGGGRGALQNQKDTVLPRRAIEREEGQLQLCSRHRES.

Positions Met1–Ala18 are cleaved as a signal peptide. Topologically, residues Arg19–Gln559 are extracellular. Residues Asn61, Asn203, Asn239, Asn276, Asn300, Asn350, Asn368, Asn440, Asn471, and Asn491 are each glycosylated (N-linked (GlcNAc...) asparagine). A disulfide bridge links Cys79 with Cys308. 2 disulfides stabilise this stretch: Cys420–Cys454 and Cys436–Cys455. 3 residues coordinate glycine: Pro516, Thr518, and Arg523. Residues Ser560–Leu580 form a helical membrane-spanning segment. Over Asp581–Thr602 the chain is Cytoplasmic. Positions Leu603–Pro624 form an intramembrane region, discontinuously helical. The tract at residues Leu603–Pro624 is pore-forming. The Cytoplasmic segment spans residues Arg625 to Arg630. A helical transmembrane segment spans residues Ile631–Tyr647. At Thr648–Asn812 the chain is on the extracellular side. An N-linked (GlcNAc...) asparagine glycan is attached at Asn674. Ser688 and Asp732 together coordinate glycine. Cys744 and Cys798 are disulfide-bonded. Asn771 is a glycosylation site (N-linked (GlcNAc...) asparagine). Residues Met813 to Ile833 traverse the membrane as a helical segment. At Glu834–Ser938 the chain is on the cytoplasmic side. Ser889 is modified (phosphoserine; by PKC). The tract at residues Ser889–Ser938 is disordered. Phosphoserine is present on Ser890. A phosphoserine; by PKC mark is found at Ser896 and Ser897. Residues Val916–Gly927 show a composition bias toward basic and acidic residues.

It belongs to the glutamate-gated ion channel (TC 1.A.10.1) family. NR1/GRIN1 subfamily. Heterotetramer; the NMDAR subunits are modular and harbor tiered domains that function in concert to regulate opening and closing of the cation-selective ion channel pore. Forms heterotetrameric channels composed of two GluN1/zeta subunits (GRIN1), and two identical GluN2/epsilon subunits (GRIN2A, GRIN2B, GRIN2C or GRIN2D) or GluN3 subunits (GRIN3A or GRIN3B) (in vitro). Can also form heterotetrameric channels that contain at least two GluN1 subunits and at least two different GluN2 subunits (or a combination of one GluN2 and one GluN3 subunits) (in vitro). In vivo, the subunit composition may vary in function of the expression levels of the different subunits. Found in a complex with GRIN2A or GRIN2B, GRIN3A and PPP2CB. Found in a complex with GRIN2A or GRIN2B and GRIN3B. Interacts with SNX27 (via PDZ domain); the interaction is required for recycling to the plasma membrane when endocytosed and prevent degradation in lysosomes. Interacts with DLG4 and MPDZ. Interacts with LRFN1 and LRFN2. Interacts with MYZAP. Found in a complex with DLG4 and PRR7. Found in a complex with GRIN2B and PRR7. Interacts with PRR7; the interaction is reduced following NMDA receptor activity. NMDA is probably regulated by C-terminal phosphorylation of an isoform of GRIN1 by PKC. Dephosphorylated on Ser-897 probably by protein phosphatase 2A (PPP2CB). Its phosphorylated state is influenced by the formation of the NMDAR-PPP2CB complex and the NMDAR channel activity. In terms of tissue distribution, detected in brain (at protein level). Detected in brain.

The protein localises to the cell membrane. The protein resides in the postsynaptic cell membrane. Its subcellular location is the postsynaptic density membrane. It is found in the synaptic cell membrane. The catalysed reaction is Ca(2+)(in) = Ca(2+)(out). The enzyme catalyses Na(+)(in) = Na(+)(out). It catalyses the reaction K(+)(in) = K(+)(out). Its function is as follows. Component of N-methyl-D-aspartate (NMDA) receptors (NMDARs) that function as heterotetrameric, ligand-gated cation channels with high calcium permeability and voltage-dependent block by Mg(2+). NMDARs participate in synaptic plasticity for learning and memory formation by contributing to the long-term potentiation (LTP). Channel activation requires binding of the neurotransmitter L-glutamate to the GluN2 subunit, glycine or D-serine binding to the GluN1 subunit, plus membrane depolarization to eliminate channel inhibition by Mg(2+). NMDARs mediate simultaneously the potasium efflux and the influx of calcium and sodium. Each GluN2 or GluN3 subunit confers differential attributes to channel properties, including activation, deactivation and desensitization kinetics, pH sensitivity, Ca2(+) permeability, and binding to allosteric modulators. The chain is Glutamate receptor ionotropic, NMDA 1 from Mus musculus (Mouse).